Reading from the N-terminus, the 259-residue chain is MSTRADGRLDDELRAVVITRGFTEHPAGSVLIEFGHTKVMCTASPTEGVPRWRKGSGKGWLTAEYAMLPSATHTRSERESVKGRLSGRTQEISRLIGRSLRACIDLAALGENTIAVDCDVLQADGGTRTAAVTGAYVALADAVTYLSAAGRLLDPRPLSCAIAAVSVGVVDGRIRVDLSYEEDSRAEVDMNVIATDTGTLVEIQGTGEGATFPRSTLDKLLDMALGACDKLFVAQRDALALPYQGMSPEGPPPPKAFGS.

Phosphate contacts are provided by residues R88 and 126–128; that span reads GTR.

It belongs to the RNase PH family. Homohexameric ring arranged as a trimer of dimers.

It catalyses the reaction tRNA(n+1) + phosphate = tRNA(n) + a ribonucleoside 5'-diphosphate. In terms of biological role, phosphorolytic 3'-5' exoribonuclease that plays an important role in tRNA 3'-end maturation. Removes nucleotide residues following the 3'-CCA terminus of tRNAs; can also add nucleotides to the ends of RNA molecules by using nucleoside diphosphates as substrates, but this may not be physiologically important. Probably plays a role in initiation of 16S rRNA degradation (leading to ribosome degradation) during starvation. The protein is Ribonuclease PH of Mycobacterium leprae (strain Br4923).